Reading from the N-terminus, the 225-residue chain is Glutathione S-transferase U2 (225 aa).

One can recognise a GST N-terminal domain in the interval 6-85; that stretch reads ESVKLLGFWI…YIDQTWNNNP (80 aa). Glutathione contacts are provided by residues 16–17, 42–43, 56–57, and 69–70; these read SP, KK, KV, and ES. The GST C-terminal domain maps to 90 to 217; sequence DPYEKAMVRF…EKHIERMKKI (128 aa). Threonine 151 is modified (phosphothreonine).

Belongs to the GST superfamily. Tau family.

It localises to the cytoplasm. Its subcellular location is the cytosol. It carries out the reaction RX + glutathione = an S-substituted glutathione + a halide anion + H(+). Its function is as follows. May be involved in the conjugation of reduced glutathione to a wide number of exogenous and endogenous hydrophobic electrophiles and have a detoxification role against certain herbicides. The polypeptide is Glutathione S-transferase U2 (GSTU2) (Arabidopsis thaliana (Mouse-ear cress)).